A 217-amino-acid chain; its full sequence is Growth hormone variant (217 aa).

Residues 1 to 26 (MAAGSRTSLLLAFGLLCLSWLQEGSA) form the signal peptide. Intrachain disulfides connect C79–C191 and C208–C215. S132 bears the Phosphoserine mark. N-linked (GlcNAc...) asparagine glycosylation occurs at N166. S176 is modified (phosphoserine).

This sequence belongs to the somatotropin/prolactin family. Monomer, dimer, trimer, tetramer and pentamer, disulfide-linked or non-covalently associated, in homomeric and heteromeric combinations. Can also form a complex either with GHBP or with the alpha2-macroglobulin complex. As to expression, expressed in the placenta.

The protein resides in the secreted. Its function is as follows. Plays an important role in growth control. Its major role in stimulating body growth is to stimulate the liver and other tissues to secrete IGF1. It stimulates both the differentiation and proliferation of myoblasts. It also stimulates amino acid uptake and protein synthesis in muscle and other tissues. This is Growth hormone variant (GH2) from Homo sapiens (Human).